Consider the following 360-residue polypeptide: Histidinol-phosphate aminotransferase (360 aa).

An N6-(pyridoxal phosphate)lysine modification is found at K218.

Belongs to the class-II pyridoxal-phosphate-dependent aminotransferase family. Histidinol-phosphate aminotransferase subfamily. Homodimer. Requires pyridoxal 5'-phosphate as cofactor.

The catalysed reaction is L-histidinol phosphate + 2-oxoglutarate = 3-(imidazol-4-yl)-2-oxopropyl phosphate + L-glutamate. Its pathway is amino-acid biosynthesis; L-histidine biosynthesis; L-histidine from 5-phospho-alpha-D-ribose 1-diphosphate: step 7/9. This chain is Histidinol-phosphate aminotransferase, found in Chlorobium phaeobacteroides (strain DSM 266 / SMG 266 / 2430).